We begin with the raw amino-acid sequence, 174 residues long: Neuromedin-U (174 aa).

Residues 1–37 (MSRAAGHRPGLSAGQLAAATASPLLSLLLLLACCADA) form the signal peptide. A propeptide spanning residues 38 to 105 (CKGVPISPQR…EQSEKDNTKR (68 aa)) is cleaved from the precursor. Position 141 is a methionine sulfoxide; partial (Met-141). Asn-166 carries the asparagine amide modification. Residues 170 to 174 (STSFI) constitute a propeptide that is removed on maturation.

This sequence belongs to the NmU family.

Its subcellular location is the secreted. Functionally, ligand for receptors NMUR1 and NMUR2. Stimulates muscle contractions of specific regions of the gastrointestinal tract. Its function is as follows. Does not function as a ligand for either NMUR1 or NMUR2. Indirectly induces prolactin release although its potency is much lower than that of neuromedin precursor-related peptide 36. Does not function as a ligand for either NMUR1 or NMUR2. Indirectly induces prolactin release from lactotroph cells in the pituitary gland, probably via the hypothalamic dopaminergic system. In terms of biological role, stimulates muscle contractions of specific regions of the gastrointestinal tract. The protein is Neuromedin-U (Nmu) of Mus musculus (Mouse).